The chain runs to 122 residues: Large ribosomal subunit protein bL12 (122 aa).

Belongs to the bacterial ribosomal protein bL12 family. Homodimer. Part of the ribosomal stalk of the 50S ribosomal subunit. Forms a multimeric L10(L12)X complex, where L10 forms an elongated spine to which 2 to 4 L12 dimers bind in a sequential fashion. Binds GTP-bound translation factors.

Functionally, forms part of the ribosomal stalk which helps the ribosome interact with GTP-bound translation factors. Is thus essential for accurate translation. The protein is Large ribosomal subunit protein bL12 of Actinobacillus pleuropneumoniae serotype 5b (strain L20).